Here is a 596-residue protein sequence, read N- to C-terminus: Putative terpene synthase 2, chloroplastic (596 aa).

The transit peptide at 1-46 directs the protein to the chloroplast; sequence MATLSMQVSTLSKQVKNLNTFGMGSASKLPMVARRVSTTRLRPICS. Asp349 and Asp353 together coordinate Mn(2+). The DDXXD motif signature appears at 349-353; sequence DDVYD. 2 homodimerization regions span residues 355–361 and 427–464; these read YGTLDEL and EAKW…FTLP. Positions 493 and 501 each coordinate Mn(2+).

Belongs to the terpene synthase family. In terms of assembly, homodimer. The cofactor is Mn(2+). Mg(2+) is required as a cofactor.

Its subcellular location is the plastid. The protein resides in the chloroplast. It participates in secondary metabolite biosynthesis; terpenoid biosynthesis. In terms of biological role, putative monoterpene synthase inactive on geranyl diphosphate (GPP). The chain is Putative terpene synthase 2, chloroplastic from Thymus vulgaris (Thyme).